Here is a 227-residue protein sequence, read N- to C-terminus: MALSIFKDLPAEHPRHLIPSLCRQFYHLGWVTGTGGGMSIKYNDEIYIAPSGVQKERMQPEDLFVQDITGKDLQLPPEIKGLKKSQCTPLFMLAYQHRQAGAVIHTHSQHAVMATLLWPGKTFRCTHLEMIKGVYDEADKRYLRYDEELVVPIIENTPFERDLADSMYAAMMEYPGCSAILVRRHGVYVWGQNWEKAKTMSECYDYLFSIAVEMKKAGIDPQKFESS.

Cys-87 contributes to the substrate binding site. Zn(2+)-binding residues include His-105 and His-107. Residue Glu-129 is the Proton donor/acceptor of the active site. His-185 contacts Zn(2+).

The protein belongs to the aldolase class II family. MtnB subfamily. Requires Zn(2+) as cofactor.

It is found in the cytoplasm. The catalysed reaction is 5-(methylsulfanyl)-D-ribulose 1-phosphate = 5-methylsulfanyl-2,3-dioxopentyl phosphate + H2O. The protein operates within amino-acid biosynthesis; L-methionine biosynthesis via salvage pathway; L-methionine from S-methyl-5-thio-alpha-D-ribose 1-phosphate: step 2/6. Its function is as follows. Catalyzes the dehydration of methylthioribulose-1-phosphate (MTRu-1-P) into 2,3-diketo-5-methylthiopentyl-1-phosphate (DK-MTP-1-P). This is Probable methylthioribulose-1-phosphate dehydratase from Drosophila erecta (Fruit fly).